A 480-amino-acid polypeptide reads, in one-letter code: Vinorine hydroxylase (480 aa).

A helical transmembrane segment spans residues 3 to 23 (LLQILLAIAGLLAILLLQKQW). A heme-binding site is contributed by C418.

It belongs to the cytochrome P450 family. The cofactor is heme. Mainly expressed in roots and, to a lesser extent, in leaves.

It localises to the membrane. It catalyses the reaction vinorine + reduced [NADPH--hemoprotein reductase] + O2 = vomilenine + oxidized [NADPH--hemoprotein reductase] + H2O + H(+). The catalysed reaction is vomilenine = perakine. The protein operates within alkaloid biosynthesis; ajmaline biosynthesis. In terms of biological role, a cytochrome P450 monooxygenase involved in the biosynthesis of ajmaline-type monoterpenoid indole alkaloids (MIAs) natural products, important plant-derived pharmaceuticals used in the therapy of heart disorders. Catalyzes the hydroxylation of vinorine to vomilenine, an intermediate chemical in the biosynthesis of ajmaline. Supports also vomilenine isomerization to perakine. In Rauvolfia serpentina (Serpentine wood), this protein is Vinorine hydroxylase.